The following is an 807-amino-acid chain: Ribosome biogenesis protein ERB1 (807 aa).

A disordered region spans residues 1–112; it reads MMAKNNKTTE…DTTSLTDRLS (112 aa). Composition is skewed to acidic residues over residues 21–30 and 42–56; these read EESDVEEDED and EASE…YESA. Phosphoserine is present on Ser-23. Basic and acidic residues predominate over residues 57 to 69; the sequence is VEEKESSSDKEAQ. Phosphoserine is present on residues Ser-72 and Ser-76. Residues 86–102 are compositionally biased toward acidic residues; it reads EEEGDEEEDYDSSEFSD. Lys-127 is covalently cross-linked (Glycyl lysine isopeptide (Lys-Gly) (interchain with G-Cter in ubiquitin)). Phosphoserine is present on residues Ser-146 and Ser-149. Residues 265 to 383 form a required for interaction with NOP7 region; that stretch reads RFVPSKNEAK…LRKVPGYGES (119 aa). The interval 383–419 is required for interaction with YTM1; that stretch reads SIRERFERSLDLYLAPRVRKNKLNIDPNSLIPELPSP. A Phosphoserine modification is found at Ser-418. WD repeat units follow at residues 435-474, 483-523, 592-634, 637-675, 678-717, 721-760, and 776-807; these read GHKG…EVYR, NPDD…YDIE, SCKK…TQSP, KSKG…LVKK, PGAR…TPYK, YHEK…DMMK, and INSL…LWTT.

The protein belongs to the WD repeat BOP1/ERB1 family. In terms of assembly, component of the NOP7 complex, composed of ERB1, NOP7 and YTM1. The complex is held together by ERB1, which interacts with NOP7 via its N-terminal domain and with YTM1 via a high-affinity interaction between the seven-bladed beta-propeller domains of the 2 proteins. The NOP7 complex associates with the 66S pre-ribosome.

Its subcellular location is the nucleus. The protein localises to the nucleolus. It localises to the nucleoplasm. Component of the NOP7 complex, which is required for maturation of the 25S and 5.8S ribosomal RNAs and formation of the 60S ribosome. The chain is Ribosome biogenesis protein ERB1 from Saccharomyces cerevisiae (strain YJM789) (Baker's yeast).